The sequence spans 107 residues: Iron-binding protein IscA (107 aa).

3 residues coordinate Fe cation: Cys-35, Cys-99, and Cys-101.

It belongs to the HesB/IscA family. In terms of assembly, homodimer; may form tetramers and higher multimers. The cofactor is Fe cation.

In terms of biological role, is able to transfer iron-sulfur clusters to apo-ferredoxin. Multiple cycles of [2Fe2S] cluster formation and transfer are observed, suggesting that IscA acts catalytically. Recruits intracellular free iron so as to provide iron for the assembly of transient iron-sulfur cluster in IscU in the presence of IscS, L-cysteine and the thioredoxin reductase system TrxA/TrxB. The chain is Iron-binding protein IscA from Yersinia enterocolitica serotype O:8 / biotype 1B (strain NCTC 13174 / 8081).